A 130-amino-acid polypeptide reads, in one-letter code: Phosphoribosyl-AMP cyclohydrolase (130 aa).

Mg(2+) is bound at residue Asp77. Zn(2+) is bound at residue Cys78. Asp79 and Asp81 together coordinate Mg(2+). Cys95 and Cys102 together coordinate Zn(2+).

The protein belongs to the PRA-CH family. Homodimer. Requires Mg(2+) as cofactor. Zn(2+) is required as a cofactor.

Its subcellular location is the cytoplasm. It catalyses the reaction 1-(5-phospho-beta-D-ribosyl)-5'-AMP + H2O = 1-(5-phospho-beta-D-ribosyl)-5-[(5-phospho-beta-D-ribosylamino)methylideneamino]imidazole-4-carboxamide. Its pathway is amino-acid biosynthesis; L-histidine biosynthesis; L-histidine from 5-phospho-alpha-D-ribose 1-diphosphate: step 3/9. Its function is as follows. Catalyzes the hydrolysis of the adenine ring of phosphoribosyl-AMP. The protein is Phosphoribosyl-AMP cyclohydrolase of Pseudomonas syringae pv. syringae (strain B728a).